The primary structure comprises 261 residues: Triosephosphate isomerase (261 aa).

10 to 12 (NWK) serves as a coordination point for substrate. The active-site Electrophile is the His-100. Catalysis depends on Glu-172, which acts as the Proton acceptor. Residues Gly-178, Ser-218, and 239-240 (GG) each bind substrate.

The protein belongs to the triosephosphate isomerase family. Homodimer.

It is found in the cytoplasm. It catalyses the reaction D-glyceraldehyde 3-phosphate = dihydroxyacetone phosphate. It functions in the pathway carbohydrate biosynthesis; gluconeogenesis. The protein operates within carbohydrate degradation; glycolysis; D-glyceraldehyde 3-phosphate from glycerone phosphate: step 1/1. Its function is as follows. Involved in the gluconeogenesis. Catalyzes stereospecifically the conversion of dihydroxyacetone phosphate (DHAP) to D-glyceraldehyde-3-phosphate (G3P). The sequence is that of Triosephosphate isomerase from Mycobacterium marinum (strain ATCC BAA-535 / M).